We begin with the raw amino-acid sequence, 241 residues long: 3-dehydroquinate dehydratase (241 aa).

3-dehydroquinate-binding positions include 35–37 and arginine 70; that span reads ELR. Catalysis depends on histidine 132, which acts as the Proton donor/acceptor. The Schiff-base intermediate with substrate role is filled by lysine 159. 2 residues coordinate 3-dehydroquinate: arginine 201 and glutamine 224.

This sequence belongs to the type-I 3-dehydroquinase family. Homodimer.

It catalyses the reaction 3-dehydroquinate = 3-dehydroshikimate + H2O. Its pathway is metabolic intermediate biosynthesis; chorismate biosynthesis; chorismate from D-erythrose 4-phosphate and phosphoenolpyruvate: step 3/7. Involved in the third step of the chorismate pathway, which leads to the biosynthesis of aromatic amino acids. Catalyzes the cis-dehydration of 3-dehydroquinate (DHQ) and introduces the first double bond of the aromatic ring to yield 3-dehydroshikimate. This is 3-dehydroquinate dehydratase from Staphylococcus carnosus (strain TM300).